Reading from the N-terminus, the 104-residue chain is uncharacterized protein (104 aa).

Helical transmembrane passes span 45-65 and 70-90; these read LYGIFSCFLLFYSLKDLIGVF and LYLSILLLWLLVLLFCLAKGL.

The protein localises to the membrane. This is an uncharacterized protein from Saccharomyces cerevisiae (strain ATCC 204508 / S288c) (Baker's yeast).